The chain runs to 1358 residues: DNA-directed RNA polymerase subunit beta (1358 aa).

The protein belongs to the RNA polymerase beta chain family. The RNAP catalytic core consists of 2 alpha, 1 beta, 1 beta' and 1 omega subunit. When a sigma factor is associated with the core the holoenzyme is formed, which can initiate transcription.

It catalyses the reaction RNA(n) + a ribonucleoside 5'-triphosphate = RNA(n+1) + diphosphate. In terms of biological role, DNA-dependent RNA polymerase catalyzes the transcription of DNA into RNA using the four ribonucleoside triphosphates as substrates. The polypeptide is DNA-directed RNA polymerase subunit beta (Francisella tularensis subsp. tularensis (strain FSC 198)).